Here is a 243-residue protein sequence, read N- to C-terminus: tRNA (guanine-N(1)-)-methyltransferase (243 aa).

Residues Gly-110 and 130-135 (VGDYVM) each bind S-adenosyl-L-methionine.

Belongs to the RNA methyltransferase TrmD family. In terms of assembly, homodimer.

The protein resides in the cytoplasm. The enzyme catalyses guanosine(37) in tRNA + S-adenosyl-L-methionine = N(1)-methylguanosine(37) in tRNA + S-adenosyl-L-homocysteine + H(+). Specifically methylates guanosine-37 in various tRNAs. This Treponema denticola (strain ATCC 35405 / DSM 14222 / CIP 103919 / JCM 8153 / KCTC 15104) protein is tRNA (guanine-N(1)-)-methyltransferase.